Consider the following 247-residue polypeptide: Adenosylcobinamide-GDP ribazoletransferase (247 aa).

6 helical membrane-spanning segments follow: residues 34–54 (IVMF…IFIL), 59–79 (CGIP…TGGF), 113–133 (GGLA…ELAL), 138–158 (MLAA…LLMY), 171–191 (VFIG…AVIV), and 194–214 (VLLP…AIFI).

It belongs to the CobS family. Requires Mg(2+) as cofactor.

It localises to the cell inner membrane. The enzyme catalyses alpha-ribazole + adenosylcob(III)inamide-GDP = adenosylcob(III)alamin + GMP + H(+). It carries out the reaction alpha-ribazole 5'-phosphate + adenosylcob(III)inamide-GDP = adenosylcob(III)alamin 5'-phosphate + GMP + H(+). It functions in the pathway cofactor biosynthesis; adenosylcobalamin biosynthesis; adenosylcobalamin from cob(II)yrinate a,c-diamide: step 7/7. Joins adenosylcobinamide-GDP and alpha-ribazole to generate adenosylcobalamin (Ado-cobalamin). Also synthesizes adenosylcobalamin 5'-phosphate from adenosylcobinamide-GDP and alpha-ribazole 5'-phosphate. The chain is Adenosylcobinamide-GDP ribazoletransferase from Salmonella schwarzengrund (strain CVM19633).